We begin with the raw amino-acid sequence, 486 residues long: MSPQIKLYLNPPKNNQYYSNHDHISGSVSVDFGKPVSIKQINVSFKGFIETMTKIDPVVMRNQAALMSPMQDAKTIHTLVNIGQKVFPPENVLSAIEGDLKPFQLKEGVHEYEFQLPKVPKKPKCLSSHTKGLMTYLDKDRVRLPPSFNNDWKNMLRFDNLDLFFYSFGKILYMVEVQIELGKPKSWYRPFEKVLTEIQLVEFIPQSKDLTFKLDDKPSKEVLESFKNSNGEQEEKTSNKLQTEKATVPTNAPLVDVMTQKPDVRVYRSTYKIGLPDDDSVMWLEARSPNLRRTFRGDPIFAGGSGKFDDIYIVMMGDKALIDRLRVIPTRVQLNLLETVTYLSQGVANQNVSSLKLAEDRIPLEKRSTVLKNSWGRYVQFSSSNPNQCKWECELRLKNHPNLKKLKFNEEDYRHRGNRLYSFKSCSIKRIFSFQLLVDWDIVGFKRQSEIIVDPIQVFADRNGRNQEEALPLYVPPPSYTESTQY.

This sequence belongs to the ART10 family.

It is found in the cytoplasm. Functionally, may regulate endocytosis by recruiting RSP5 ubiquitin ligase activity to specific plasma membrane proteins in response to extracellular stimuli. The sequence is that of Arrestin-related trafficking adapter 10 (ART10) from Zygosaccharomyces rouxii (strain ATCC 2623 / CBS 732 / NBRC 1130 / NCYC 568 / NRRL Y-229).